A 1360-amino-acid chain; its full sequence is DNA-directed RNA polymerase subunit beta (1360 aa).

This sequence belongs to the RNA polymerase beta chain family. As to quaternary structure, the RNAP catalytic core consists of 2 alpha, 1 beta, 1 beta' and 1 omega subunit. When a sigma factor is associated with the core the holoenzyme is formed, which can initiate transcription.

It carries out the reaction RNA(n) + a ribonucleoside 5'-triphosphate = RNA(n+1) + diphosphate. In terms of biological role, DNA-dependent RNA polymerase catalyzes the transcription of DNA into RNA using the four ribonucleoside triphosphates as substrates. The sequence is that of DNA-directed RNA polymerase subunit beta from Ruthia magnifica subsp. Calyptogena magnifica.